A 973-amino-acid chain; its full sequence is Leucine--tRNA ligase, chloroplastic/mitochondrial (973 aa).

The short motif at 126-135 (PSGAGLHVGH) is the 'HIGH' region element. The 'KMSKS' region motif lies at 730-734 (KMSKS). K733 provides a ligand contact to ATP.

The protein belongs to the class-I aminoacyl-tRNA synthetase family.

The protein resides in the plastid. It localises to the chloroplast. It is found in the mitochondrion. The catalysed reaction is tRNA(Leu) + L-leucine + ATP = L-leucyl-tRNA(Leu) + AMP + diphosphate. Functionally, catalyzes the specific attachment of an amino acid to its cognate tRNA in a two step reaction: the amino acid (AA) is first activated by ATP to form AA-AMP and then transferred to the acceptor end of the tRNA. The chain is Leucine--tRNA ligase, chloroplastic/mitochondrial from Arabidopsis thaliana (Mouse-ear cress).